A 107-amino-acid polypeptide reads, in one-letter code: UPF0145 protein ETA_21660 (107 aa).

The protein belongs to the UPF0145 family.

This Erwinia tasmaniensis (strain DSM 17950 / CFBP 7177 / CIP 109463 / NCPPB 4357 / Et1/99) protein is UPF0145 protein ETA_21660.